A 1009-amino-acid chain; its full sequence is Lateral signaling target protein 2 homolog (1009 aa).

Disordered regions lie at residues 313–460 (PVGS…EEQL), 497–629 (ASED…KRCS), and 777–905 (MQRN…TATA). 3 stretches are compositionally biased toward low complexity: residues 327-348 (SSTP…SSSG), 364-398 (QRNN…TPTA), and 406-427 (PSHS…HPPA). Positions 430-458 (SDGDDEDEDEEEDEEEDELEDTEDDTDEE) are enriched in acidic residues. Ser541 is modified (phosphoserine). A compositionally biased stretch (basic and acidic residues) spans 544-558 (SEPHRDQGETIKSTE). Over residues 562-575 (QQQQQQEQQTLQSS) the composition is skewed to low complexity. Composition is skewed to basic residues over residues 576–601 (RQRH…HHST) and 609–627 (QPHH…GRKR). The span at 780–798 (NNTIDNPSSSNTSSSSATT) shows a compositional bias: low complexity. Position 807 is a phosphoserine (Ser807). Low complexity predominate over residues 822 to 878 (VHQQEQEMQQQQDHQQQQHQHQVQVQLQRQRNNSVGSNTPSSASSTSSSSEQNSPVS). Residues 917 to 977 (DGKAPRCMSC…VCRDCYVREV (61 aa)) form an FYVE-type zinc finger. The Zn(2+) site is built by Cys923, Cys926, Cys939, Cys942, Cys947, Cys950, Cys969, and Cys972.

The protein belongs to the lst-2 family.

In terms of biological role, negative regulator of epidermal growth factor receptor (EGFR) signaling. The chain is Lateral signaling target protein 2 homolog from Drosophila persimilis (Fruit fly).